Here is a 200-residue protein sequence, read N- to C-terminus: FMN-dependent NADH:quinone oxidoreductase 2 (200 aa).

135 to 138 (SRGG) serves as a coordination point for FMN.

Belongs to the azoreductase type 1 family. In terms of assembly, homodimer. FMN serves as cofactor.

It carries out the reaction 2 a quinone + NADH + H(+) = 2 a 1,4-benzosemiquinone + NAD(+). The enzyme catalyses N,N-dimethyl-1,4-phenylenediamine + anthranilate + 2 NAD(+) = 2-(4-dimethylaminophenyl)diazenylbenzoate + 2 NADH + 2 H(+). In terms of biological role, quinone reductase that provides resistance to thiol-specific stress caused by electrophilic quinones. Also exhibits azoreductase activity. Catalyzes the reductive cleavage of the azo bond in aromatic azo compounds to the corresponding amines. The protein is FMN-dependent NADH:quinone oxidoreductase 2 of Clostridium acetobutylicum (strain ATCC 824 / DSM 792 / JCM 1419 / IAM 19013 / LMG 5710 / NBRC 13948 / NRRL B-527 / VKM B-1787 / 2291 / W).